A 368-amino-acid chain; its full sequence is Peptide chain release factor 2 (368 aa).

N5-methylglutamine is present on glutamine 248.

This sequence belongs to the prokaryotic/mitochondrial release factor family. In terms of processing, methylated by PrmC. Methylation increases the termination efficiency of RF2.

The protein resides in the cytoplasm. In terms of biological role, peptide chain release factor 2 directs the termination of translation in response to the peptide chain termination codons UGA and UAA. This chain is Peptide chain release factor 2, found in Corynebacterium glutamicum (strain R).